The chain runs to 1083 residues: Alpha-mannosidase (1083 aa).

Position 2 is an N-acetylserine (Ser2). 4 residues coordinate Zn(2+): His298, Asp300, Asp411, and His626. Catalysis depends on Asp411, which acts as the Nucleophile.

The protein belongs to the glycosyl hydrolase 38 family. Composed of isoforms with three constituent polypeptides described as [(107 kDa)-n (73 kDa)-(6-n) (31 kDa)-(6-n)], where n is 0-6. The 73 kDa and the 31 kDa polypeptides may be proteolytic derivatives of the 107 kDa polypeptide in the vacuole. Oligomerizes in the cytoplasm and retains its oligomeric form during import into the vacuole. The cofactor is Zn(2+). In terms of processing, the N-terminus is blocked.

It is found in the vacuole. It catalyses the reaction Hydrolysis of terminal, non-reducing alpha-D-mannose residues in alpha-D-mannosides.. In terms of biological role, degrades free oligosaccharides in the vacuole. The sequence is that of Alpha-mannosidase (AMS1) from Saccharomyces cerevisiae (strain ATCC 204508 / S288c) (Baker's yeast).